A 916-amino-acid chain; its full sequence is DNA mismatch repair protein MutS (916 aa).

G665–S672 contacts ATP.

The protein belongs to the DNA mismatch repair MutS family.

Its function is as follows. This protein is involved in the repair of mismatches in DNA. It is possible that it carries out the mismatch recognition step. This protein has a weak ATPase activity. The polypeptide is DNA mismatch repair protein MutS (Bradyrhizobium sp. (strain ORS 278)).